Consider the following 596-residue polypeptide: Adenine deaminase (596 aa).

It belongs to the metallo-dependent hydrolases superfamily. Adenine deaminase family. Mn(2+) is required as a cofactor.

The enzyme catalyses adenine + H2O + H(+) = hypoxanthine + NH4(+). The protein is Adenine deaminase of Moorella thermoacetica (strain ATCC 39073 / JCM 9320).